The chain runs to 72 residues: Large ribosomal subunit protein bL31 (72 aa).

C16, C18, C37, and C40 together coordinate Zn(2+).

It belongs to the bacterial ribosomal protein bL31 family. Type A subfamily. Part of the 50S ribosomal subunit. It depends on Zn(2+) as a cofactor.

Its function is as follows. Binds the 23S rRNA. This chain is Large ribosomal subunit protein bL31, found in Buchnera aphidicola subsp. Acyrthosiphon pisum (strain APS) (Acyrthosiphon pisum symbiotic bacterium).